The primary structure comprises 325 residues: GMP reductase (325 aa).

The active-site Thioimidate intermediate is Cys-174. 203-226 contributes to the NADP(+) binding site; that stretch reads LIADGGIRTHGDIAKSIRFGASMV.

This sequence belongs to the IMPDH/GMPR family. GuaC type 2 subfamily.

The catalysed reaction is IMP + NH4(+) + NADP(+) = GMP + NADPH + 2 H(+). In terms of biological role, catalyzes the irreversible NADPH-dependent deamination of GMP to IMP. It functions in the conversion of nucleobase, nucleoside and nucleotide derivatives of G to A nucleotides, and in maintaining the intracellular balance of A and G nucleotides. This is GMP reductase from Staphylococcus aureus (strain bovine RF122 / ET3-1).